We begin with the raw amino-acid sequence, 490 residues long: Adenylosuccinate synthetase, chloroplastic (490 aa).

The N-terminal 45 residues, 1-45 (MSLSSLTLDSNPRFAVGGPYHRRYPPLHHPRSFVSCSAKRPAVSA), are a transit peptide targeting the chloroplast. Residue serine 46 is modified to N-acetylserine. Residues 77–83 (GDEGKGK) and 105–107 (GHT) each bind GTP. Residue aspartate 78 is the Proton acceptor of the active site. Mg(2+)-binding residues include aspartate 78 and glycine 105. IMP contacts are provided by residues 78 to 81 (DEGK), 103 to 106 (NAGH), threonine 195, arginine 209, glutamine 289, threonine 304, and arginine 368. The active-site Proton donor is the histidine 106. 364-370 (TTTGRPR) contacts substrate. GTP is bound by residues arginine 370, 396–398 (KLD), and 479–481 (GIG).

The protein belongs to the adenylosuccinate synthetase family. As to quaternary structure, homodimer. Mg(2+) is required as a cofactor.

The protein localises to the plastid. The protein resides in the chloroplast. The catalysed reaction is IMP + L-aspartate + GTP = N(6)-(1,2-dicarboxyethyl)-AMP + GDP + phosphate + 2 H(+). The protein operates within purine metabolism; AMP biosynthesis via de novo pathway; AMP from IMP: step 1/2. Its function is as follows. Plays an important role in the de novo pathway and in the salvage pathway of purine nucleotide biosynthesis. Catalyzes the first committed step in the biosynthesis of AMP from IMP. This Arabidopsis thaliana (Mouse-ear cress) protein is Adenylosuccinate synthetase, chloroplastic.